A 618-amino-acid polypeptide reads, in one-letter code: Polyamine transporter TPO5 (618 aa).

The Cytoplasmic portion of the chain corresponds to 1 to 60 (MPEYTLLADNIRENIVHFDPNGLFDNLHTIVHEDDSQENEEAEHFNYDQVLDKSLLSRGS). A helical transmembrane segment spans residues 61–84 (IVGLGLGLMSPVLGMCTSMAIGLI). Residues 85-90 (NGGPLT) lie on the Extracellular side of the membrane. Residues 91 to 110 (IMLGFLISGVCIWFSSLSLG) form a helical membrane-spanning segment. Residues 111 to 131 (EIVSKFPMELHVGSAMLAPEK) are Cytoplasmic-facing. The chain crosses the membrane as a helical span at residues 132–148 (LKLVCSWYTGWLMLIGN). The Extracellular portion of the chain corresponds to 149–154 (WTMSTS). Residues 155–171 (ITFAGAQLTISLILMTN) traverse the membrane as a helical segment. The Cytoplasmic segment spans residues 172–179 (SNLISEAH). The chain crosses the membrane as a helical span at residues 180–200 (LIFYTVIVFYLVVTVVGLVNL). The Extracellular portion of the chain corresponds to 201–211 (KFARFIETINK). The chain crosses the membrane as a helical span at residues 212–231 (VCVYWIIYAIIFIDILLLVF). Residues 232–297 (HKGKFRSLKY…EKDIPRGMSN (66 aa)) lie on the Cytoplasmic side of the membrane. The helical transmembrane segment at 298–317 (AVLLSAFSGVIFLIPIMLIL) threads the bilayer. The Extracellular portion of the chain corresponds to 318-342 (PDNDLLFTNHKVLPIVNIFTKSTDS). A helical transmembrane segment spans residues 343–367 (VVLSFFLVLLILGNLLFSGIGSITT). Topologically, residues 368–402 (SSRAVYSFSRDQAIPYYDKWTYVEPDSQSKVPKNS) are cytoplasmic. Residues 403-419 (VVLSMIISYFLGLLALI) traverse the membrane as a helical segment. Residues 420-425 (STAAFN) lie on the Extracellular side of the membrane. Residues 426-449 (AFIGAAVLCLCSATFIPLVLVLFT) form a helical membrane-spanning segment. Residues 450–464 (RRRAIRSAPVKIRYK) are Cytoplasmic-facing. The chain crosses the membrane as a helical span at residues 465 to 486 (FGWFINIVSIVWLLLSMVSVCL). Residues 487-498 (PTQVPVTFKTMN) are Extracellular-facing. Residues 499–516 (YALMVYVFCILVITGLYF) traverse the membrane as a helical segment. Over 517-618 (KWGKYNFRLP…DLADDRRYDI (102 aa)) the chain is Cytoplasmic. A Phosphoserine modification is found at Ser-569. Positions 576–618 (VHPKSSTENPFEENEENVITDYGDEHHTAEQEFDLADDRRYDI) are disordered. The segment covering 598–618 (GDEHHTAEQEFDLADDRRYDI) has biased composition (basic and acidic residues).

Belongs to the amino acid-polyamine-organocation (APC) superfamily.

It is found in the golgi apparatus membrane. Its function is as follows. Required for polyamine transport. Transports putrescine effectively and spermidine less effectively. The protein is Polyamine transporter TPO5 (TPO5) of Saccharomyces cerevisiae (strain ATCC 204508 / S288c) (Baker's yeast).